Here is a 369-residue protein sequence, read N- to C-terminus: DNA replication and repair protein RecF (369 aa).

30–37 contributes to the ATP binding site; it reads GENGQGKT.

The protein belongs to the RecF family.

The protein resides in the cytoplasm. Functionally, the RecF protein is involved in DNA metabolism; it is required for DNA replication and normal SOS inducibility. RecF binds preferentially to single-stranded, linear DNA. It also seems to bind ATP. The chain is DNA replication and repair protein RecF from Anaeromyxobacter sp. (strain Fw109-5).